Consider the following 1234-residue polypeptide: Transcription-repair-coupling factor (1234 aa).

A Helicase ATP-binding domain is found at 663–824 (DMEKPIPMDR…LAGIREMSTI (162 aa)). 676–683 (GDVGYGKT) provides a ligand contact to ATP. A DEEQ box motif is present at residues 777–780 (DEEQ). A Helicase C-terminal domain is found at 842 to 999 (DDKQIAAALR…GMAVALKDLE (158 aa)). The interval 1207 to 1234 (RQHIGITNPSPPGEDGRGRNTTIKERQP) is disordered. A compositionally biased stretch (basic and acidic residues) spans 1220-1234 (EDGRGRNTTIKERQP).

In the N-terminal section; belongs to the UvrB family. It in the C-terminal section; belongs to the helicase family. RecG subfamily.

Its subcellular location is the cytoplasm. In terms of biological role, couples transcription and DNA repair by recognizing RNA polymerase (RNAP) stalled at DNA lesions. Mediates ATP-dependent release of RNAP and its truncated transcript from the DNA, and recruitment of nucleotide excision repair machinery to the damaged site. The sequence is that of Transcription-repair-coupling factor from Mycobacterium bovis (strain ATCC BAA-935 / AF2122/97).